We begin with the raw amino-acid sequence, 191 residues long: Protein Ves (191 aa).

Belongs to the Ves family.

This chain is Protein Ves, found in Escherichia coli O8 (strain IAI1).